The chain runs to 362 residues: Chorismate synthase (362 aa).

The NADP(+) site is built by arginine 48 and arginine 54. Residues 131 to 133 (RSS), 243 to 244 (NA), glycine 287, 302 to 306 (KPTSS), and arginine 328 each bind FMN.

It belongs to the chorismate synthase family. In terms of assembly, homotetramer. It depends on FMNH2 as a cofactor.

It catalyses the reaction 5-O-(1-carboxyvinyl)-3-phosphoshikimate = chorismate + phosphate. Its pathway is metabolic intermediate biosynthesis; chorismate biosynthesis; chorismate from D-erythrose 4-phosphate and phosphoenolpyruvate: step 7/7. Functionally, catalyzes the anti-1,4-elimination of the C-3 phosphate and the C-6 proR hydrogen from 5-enolpyruvylshikimate-3-phosphate (EPSP) to yield chorismate, which is the branch point compound that serves as the starting substrate for the three terminal pathways of aromatic amino acid biosynthesis. This reaction introduces a second double bond into the aromatic ring system. This Rhodopseudomonas palustris (strain ATCC BAA-98 / CGA009) protein is Chorismate synthase.